Consider the following 55-residue polypeptide: MPKCPKCGAEVKEPIKTWVLAPKGRKGVIIGLFRCPNGHYFRAKVGEAPPKKEAA.

This sequence belongs to the Cren7 family. In terms of assembly, monomer. Post-translationally, methylated at multiple sites, to varying extents.

It is found in the chromosome. The protein resides in the cytoplasm. Its function is as follows. A chromatin protein, binds double-stranded DNA without sequence specificity. Constrains negative DNA supercoils. The sequence is that of Chromatin protein Cren7 from Ignicoccus hospitalis (strain KIN4/I / DSM 18386 / JCM 14125).